The primary structure comprises 418 residues: GTPase Obg (418 aa).

The 156-residue stretch at methionine 1 to leucine 156 folds into the Obg domain. The OBG-type G domain maps to alanine 157–lysine 324. GTP is bound by residues glycine 163–serine 170, phenylalanine 188–valine 192, aspartate 209–glycine 212, asparagine 278–aspartate 281, and serine 305–leucine 307. 2 residues coordinate Mg(2+): serine 170 and threonine 190. An OCT domain is found at valine 339–asparagine 417.

It belongs to the TRAFAC class OBG-HflX-like GTPase superfamily. OBG GTPase family. In terms of assembly, monomer. It depends on Mg(2+) as a cofactor.

Its subcellular location is the cytoplasm. An essential GTPase which binds GTP, GDP and possibly (p)ppGpp with moderate affinity, with high nucleotide exchange rates and a fairly low GTP hydrolysis rate. Plays a role in control of the cell cycle, stress response, ribosome biogenesis and in those bacteria that undergo differentiation, in morphogenesis control. The chain is GTPase Obg from Mycoplasmopsis pulmonis (strain UAB CTIP) (Mycoplasma pulmonis).